The following is a 246-amino-acid chain: Orotidine 5'-phosphate decarboxylase (246 aa).

Substrate is bound by residues aspartate 18, lysine 39, 66 to 75 (DLKFHDIPAT), threonine 130, arginine 192, glutamine 201, glycine 221, and arginine 222. Lysine 68 (proton donor) is an active-site residue.

The protein belongs to the OMP decarboxylase family. Type 1 subfamily. Homodimer.

The enzyme catalyses orotidine 5'-phosphate + H(+) = UMP + CO2. It functions in the pathway pyrimidine metabolism; UMP biosynthesis via de novo pathway; UMP from orotate: step 2/2. Its function is as follows. Catalyzes the decarboxylation of orotidine 5'-monophosphate (OMP) to uridine 5'-monophosphate (UMP). The polypeptide is Orotidine 5'-phosphate decarboxylase (Parasynechococcus marenigrum (strain WH8102)).